Reading from the N-terminus, the 290-residue chain is ADP-dependent (S)-NAD(P)H-hydrate dehydratase (290 aa).

Residues Asn5–Ile278 form the YjeF C-terminal domain. Positions 40, 103, and 152 each coordinate (6S)-NADPHX. Gly218 is an AMP binding site. (6S)-NADPHX is bound at residue Asp219.

This sequence belongs to the NnrD/CARKD family. In terms of assembly, homotetramer. Requires Mg(2+) as cofactor.

It carries out the reaction (6S)-NADHX + ADP = AMP + phosphate + NADH + H(+). The catalysed reaction is (6S)-NADPHX + ADP = AMP + phosphate + NADPH + H(+). Functionally, catalyzes the dehydration of the S-form of NAD(P)HX at the expense of ADP, which is converted to AMP. Together with NAD(P)HX epimerase, which catalyzes the epimerization of the S- and R-forms, the enzyme allows the repair of both epimers of NAD(P)HX, a damaged form of NAD(P)H that is a result of enzymatic or heat-dependent hydration. This is ADP-dependent (S)-NAD(P)H-hydrate dehydratase from Streptococcus pneumoniae (strain ATCC BAA-255 / R6).